The following is a 254-amino-acid chain: Long form salivary protein D7LC (254 aa).

The N-terminal stretch at 1–19 (MNAVITSLLFLSLVGLGYS) is a signal peptide. Disulfide bonds link Cys-36-Cys-66 and Cys-62-Cys-112. Residue Trp-49 participates in thromboxane A2 binding. Trp-52 serves as a coordination point for leukotriene C4. Residue Tyr-63 participates in thromboxane A2 binding. Positions 136 and 154 each coordinate leukotriene C4. Lys-154 provides a ligand contact to thromboxane A2. Intrachain disulfides connect Cys-162-Cys-178, Cys-174-Cys-221, and Cys-211-Cys-230.

This sequence belongs to the PBP/GOBP family.

The protein localises to the secreted. Its function is as follows. Modulates blood feeding of female sandflies on vertebrate species by binding and sequestering different mediators involved in the host response. Binds leukotriene C4, leukotriene D4, leukotriene E4 and U-46619, a stable analog of thromboxane A2. Does not bind histamine or serotonin. Inhibits platelet aggregation induced by low concentrations of collagen in thromboxane A2-dependent manner. In Phlebotomus papatasi (Sandfly), this protein is Long form salivary protein D7LC.